Consider the following 312-residue polypeptide: Olfactory receptor 6Z7 (312 aa).

The Extracellular segment spans residues Met-1–Asp-29. N-linked (GlcNAc...) asparagine glycosylation is present at Asn-9. Residues Ala-30–Ile-50 traverse the membrane as a helical segment. Residues Tyr-51–Asn-69 are Cytoplasmic-facing. A helical membrane pass occupies residues Leu-70–Trp-90. A topological domain (extracellular) is located at residue Asn-91. The helical transmembrane segment at Gly-92 to Val-112 threads the bilayer. Cys-101 and Cys-193 are joined by a disulfide. Topologically, residues Gly-113 to Arg-141 are cytoplasmic. The chain crosses the membrane as a helical span at residues Pro-142–Ile-162. Topologically, residues Lys-163–His-195 are extracellular. N-linked (GlcNAc...) asparagine glycosylation is present at Asn-190. Residues Val-196–Leu-216 form a helical membrane-spanning segment. The Cytoplasmic portion of the chain corresponds to Thr-217–Ala-241. The chain crosses the membrane as a helical span at residues Phe-242–Ile-262. At Tyr-263 to Asn-275 the chain is on the extracellular side. Residues Lys-276–Leu-296 traverse the membrane as a helical segment. The Cytoplasmic segment spans residues Arg-297–Ser-312.

It belongs to the G-protein coupled receptor 1 family.

Its subcellular location is the cell membrane. Odorant receptor. The protein is Olfactory receptor 6Z7 of Mus musculus (Mouse).